The primary structure comprises 272 residues: Outer surface protein A (272 aa).

The N-terminal stretch at 1–16 is a signal peptide; that stretch reads MKKYLLGIGLILALIA. Residue cysteine 17 is the site of N-palmitoyl cysteine attachment. Cysteine 17 carries S-diacylglycerol cysteine lipidation.

This sequence belongs to the OspA lipoprotein family.

The protein resides in the cell outer membrane. The protein localises to the cell surface. The sequence is that of Outer surface protein A from Borreliella burgdorferi (Lyme disease spirochete).